The sequence spans 175 residues: Adenylate kinase isoenzyme 6 homolog (175 aa).

Residues Gly17, Gly19, Lys20, Thr21, and Ser22 each coordinate ATP. The tract at residues 37–60 is NMPbind; the sequence is DISSAVKEKELHDGWDSEFQCYIL. An LID region spans residues 112–122; it reads KRNYNQHKITN. Arg113 lines the ATP pocket.

The protein belongs to the adenylate kinase family. AK6 subfamily. As to quaternary structure, monomer and homodimer. Interacts with small ribosomal subunit protein uS11. Not a structural component of 43S pre-ribosomes, but transiently interacts with them by binding to uS11.

The protein localises to the cytoplasm. The protein resides in the nucleus. The catalysed reaction is AMP + ATP = 2 ADP. It carries out the reaction ATP + H2O = ADP + phosphate + H(+). Its function is as follows. Broad-specificity nucleoside monophosphate (NMP) kinase that catalyzes the reversible transfer of the terminal phosphate group between nucleoside triphosphates and monophosphates. Also has ATPase activity. Involved in the late cytoplasmic maturation steps of the 40S ribosomal particles, specifically 18S rRNA maturation. While NMP activity is not required for ribosome maturation, ATPase activity is. Associates transiently with small ribosomal subunit protein uS11. ATP hydrolysis breaks the interaction with uS11. May temporarily remove uS11 from the ribosome to enable a conformational change of the ribosomal RNA that is needed for the final maturation step of the small ribosomal subunit. Its NMP activity may have a role in nuclear energy homeostasis. This chain is Adenylate kinase isoenzyme 6 homolog, found in Dictyostelium discoideum (Social amoeba).